The chain runs to 586 residues: Capsid scaffolding protein (586 aa).

Active-site charge relay system residues include histidine 53, serine 123, and histidine 142. The segment covering 251-263 has biased composition (basic and acidic residues); the sequence is SEETPENAIKDRS. Disordered stretches follow at residues 251–288, 330–364, 458–486, and 530–586; these read SEETPENAIKDRSVSTQTAPSFDISESQQPSGQTHVPA, ARRDNDRRPVSPSREFSRRSRDSTHECSPGRDIWP, NKRDSEYSENNPRKRSARTISENDPYFPG, and SASN…MMAD. Polar residues predominate over residues 264–284; it reads VSTQTAPSFDISESQQPSGQT. The tract at residues 312–331 is interaction with pAP; sequence EDMVYVPFEKYASLLAASAR. 2 interaction with major capsid protein regions span residues 566–586 and 567–586; these read DAQTKLKRKKEAAAFAQMMAD and AQTKLKRKKEAAAFAQMMAD.

It belongs to the herpesviridae capsid scaffolding protein family. As to quaternary structure, homomultimer. Interacts with major capsid protein. Exists in a monomer-dimer equilibrium with the dimer being the active species. Post-translationally, capsid scaffolding protein is cleaved by assemblin after formation of the spherical procapsid. As a result, the capsid obtains its mature, icosahedral shape. Cleavages occur at two or more sites: release (R-site) and maturation (M-site).

Its subcellular location is the host cytoplasm. The protein localises to the host nucleus. The catalysed reaction is Cleaves -Ala-|-Ser- and -Ala-|-Ala- bonds in the scaffold protein.. Functionally, acts as a scaffold protein by binding major capsid protein in the cytoplasm, inducing the nuclear localization of both proteins. Multimerizes in the nucleus such as major capsid protein forms the icosahedral T=16 capsid. Autocatalytic cleavage releases the assembly protein, and subsequently abolishes interaction with major capsid protein. Cleavages products are evicted from the capsid before or during DNA packaging. Protease that plays an essential role in virion assembly within the nucleus. Catalyzes the cleavage of the assembly protein after formation of the spherical procapsid. By that cleavage, the capsid matures and gains its icosahedral shape. The cleavage sites seem to include -Ala-Ser-, -Ala-Ala-, as well as Ala-Thr bonds. Assemblin and cleavages products are evicted from the capsid before or during DNA packaging. In terms of biological role, plays a major role in capsid assembly. Acts as a scaffold protein by binding major capsid protein. Multimerizes in the nucleus such as major capsid protein forms the icosahedral T=16 capsid. Cleaved by assemblin after capsid completion. The cleavages products are evicted from the capsid before or during DNA packaging. The chain is Capsid scaffolding protein from Gallus gallus (Chicken).